The sequence spans 61 residues: Metallothionein-1A (61 aa).

Residue Met1 is modified to N-acetylmethionine. Residues 1–29 (MDPNCSCPTGGSCSCAGSCTCKACRCPSC) form a beta region. A divalent metal cation is bound by residues Cys5, Cys7, Cys13, Cys15, Cys19, Cys21, Cys24, Cys26, Cys29, Cys33, Cys34, Cys36, Cys37, Cys41, Cys44, Cys48, Cys50, and Cys57. The interval 30–61 (KKSCCSCCPVGCAKCAQGCVCKGASDKCSCCA) is alpha. At Ser58 the chain carries Phosphoserine. The a divalent metal cation site is built by Cys59 and Cys60.

The protein belongs to the metallothionein superfamily. Type 1 family. As to quaternary structure, monomer.

In terms of biological role, metallothioneins have a high content of cysteine residues that bind various heavy metals; these proteins are transcriptionally regulated by both heavy metals and glucocorticoids. The polypeptide is Metallothionein-1A (MT1A) (Bos taurus (Bovine)).